The following is a 428-amino-acid chain: Enolase (428 aa).

Glutamine 163 contributes to the (2R)-2-phosphoglycerate binding site. Glutamate 205 serves as the catalytic Proton donor. The Mg(2+) site is built by aspartate 242, glutamate 285, and aspartate 311. Residues lysine 336, arginine 365, serine 366, and lysine 387 each coordinate (2R)-2-phosphoglycerate. The Proton acceptor role is filled by lysine 336.

It belongs to the enolase family. Mg(2+) serves as cofactor.

It is found in the cytoplasm. It localises to the secreted. Its subcellular location is the cell surface. It catalyses the reaction (2R)-2-phosphoglycerate = phosphoenolpyruvate + H2O. Its pathway is carbohydrate degradation; glycolysis; pyruvate from D-glyceraldehyde 3-phosphate: step 4/5. Its function is as follows. Catalyzes the reversible conversion of 2-phosphoglycerate (2-PG) into phosphoenolpyruvate (PEP). It is essential for the degradation of carbohydrates via glycolysis. The polypeptide is Enolase (Desulfatibacillum aliphaticivorans).